The sequence spans 1086 residues: Isoleucine--tRNA ligase (1086 aa).

The 'HIGH' region signature appears at 53–63 (PFANGLPHYGH). The short motif at 624–628 (KLSKR) is the 'KMSKS' region element. Lysine 627 lines the ATP pocket.

The protein belongs to the class-I aminoacyl-tRNA synthetase family. IleS type 2 subfamily. In terms of assembly, monomer. Requires Zn(2+) as cofactor.

Its subcellular location is the cytoplasm. It catalyses the reaction tRNA(Ile) + L-isoleucine + ATP = L-isoleucyl-tRNA(Ile) + AMP + diphosphate. Catalyzes the attachment of isoleucine to tRNA(Ile). As IleRS can inadvertently accommodate and process structurally similar amino acids such as valine, to avoid such errors it has two additional distinct tRNA(Ile)-dependent editing activities. One activity is designated as 'pretransfer' editing and involves the hydrolysis of activated Val-AMP. The other activity is designated 'posttransfer' editing and involves deacylation of mischarged Val-tRNA(Ile). The chain is Isoleucine--tRNA ligase from Rickettsia typhi (strain ATCC VR-144 / Wilmington).